Here is a 513-residue protein sequence, read N- to C-terminus: ATP synthase subunit alpha (513 aa).

169–176 (GDRQTGKT) is an ATP binding site.

It belongs to the ATPase alpha/beta chains family. As to quaternary structure, F-type ATPases have 2 components, CF(1) - the catalytic core - and CF(0) - the membrane proton channel. CF(1) has five subunits: alpha(3), beta(3), gamma(1), delta(1), epsilon(1). CF(0) has three main subunits: a(1), b(2) and c(9-12). The alpha and beta chains form an alternating ring which encloses part of the gamma chain. CF(1) is attached to CF(0) by a central stalk formed by the gamma and epsilon chains, while a peripheral stalk is formed by the delta and b chains.

The protein resides in the cell inner membrane. It carries out the reaction ATP + H2O + 4 H(+)(in) = ADP + phosphate + 5 H(+)(out). Its function is as follows. Produces ATP from ADP in the presence of a proton gradient across the membrane. The alpha chain is a regulatory subunit. In Bordetella pertussis (strain Tohama I / ATCC BAA-589 / NCTC 13251), this protein is ATP synthase subunit alpha.